The primary structure comprises 296 residues: 110 kDa antigen (296 aa).

Residues 132 to 143 form a 1; approximate repeat; sequence EETQKTVEPEQI. The 13.5 X 12 AA approximate tandem repeats of E-E-T-Q-K-T-V-E-P-E-Q-T stretch occupies residues 132–296; that stretch reads EETQKTVEPE…TQETQNTVEP (165 aa). The interval 133 to 296 is disordered; the sequence is ETQKTVEPEQ…TQETQNTVEP (164 aa). Residues 144–155 form a 2; approximate repeat; sequence EETQNTVEPEQT. Copy 3 of the repeat occupies 156–167; it reads EETQKTVEPEQT. The 4; approximate repeat unit spans residues 168-179; that stretch reads EETQNTVEPEQI. Residues 180–191 form repeat 5; that stretch reads EETQKTVEPEQT. The span at 181 to 271 shows a compositional bias: basic and acidic residues; the sequence is ETQKTVEPEQ…QTEETQKTVE (91 aa). The stretch at 192 to 203 is one 6; approximate repeat; it reads EEAQKTVEPEQT. Tandem repeats lie at residues 204-215, 216-227, 228-239, 240-251, 252-263, and 264-275. The stretch at 276–287 is one 13; approximate repeat; it reads EETQNTVEPEPT. Polar residues predominate over residues 277 to 296; sequence ETQNTVEPEPTQETQNTVEP. The stretch at 288–293 is one 14; truncated repeat; sequence QETQNT.

In Plasmodium knowlesi, this protein is 110 kDa antigen.